A 322-amino-acid chain; its full sequence is MEAFIIFLISSTSIPLLSNSAFELFNMIPRCSVSWTSLKKLSLRFCELSDECIAKILSGCPILESLTLSHCIYLTVLDLSKSLRLRTLEIACNIDNTRPRQIVAPHIHRLRLKTYQSPCALVDVSSLDEAQVDCFIYSHLKTLDAYLLQDILKMLEKLQNAEKLIFGCNILQILSLAEVCGLPFPMFKTKALTLETDIFQYVIPGIERLLQNSPDLKTVTVRPSDGNIMPGRCFDNYLDLQGLNPNQCWRSKDGVFWNKSRSNLGSKRVTLFVELMLKNTKILDKMVVQLNEHYLRSKLKEFVPTFSQKNNVLIVLSTTLRL.

In terms of domain architecture, F-box spans 45–88 (FCELSDECIAKILSGCPILESLTLSHCIYLTVLDLSKSLRLRTL).

The polypeptide is Probable F-box protein At1g60180 (Arabidopsis thaliana (Mouse-ear cress)).